The sequence spans 335 residues: Glutamyl-tRNA reductase (335 aa).

Substrate contacts are provided by residues 60-63 (TCHR), serine 110, 115-117 (ETE), and glutamine 121. Cysteine 61 functions as the Nucleophile in the catalytic mechanism. 189 to 194 (GYSEIN) provides a ligand contact to NADP(+).

This sequence belongs to the glutamyl-tRNA reductase family. Homodimer.

It carries out the reaction (S)-4-amino-5-oxopentanoate + tRNA(Glu) + NADP(+) = L-glutamyl-tRNA(Glu) + NADPH + H(+). Its pathway is porphyrin-containing compound metabolism; protoporphyrin-IX biosynthesis; 5-aminolevulinate from L-glutamyl-tRNA(Glu): step 1/2. In terms of biological role, catalyzes the NADPH-dependent reduction of glutamyl-tRNA(Glu) to glutamate 1-semialdehyde (GSA). In Chlamydia trachomatis serovar D (strain ATCC VR-885 / DSM 19411 / UW-3/Cx), this protein is Glutamyl-tRNA reductase.